The primary structure comprises 396 residues: Tyrosine--tRNA ligase (396 aa).

Positions 43–52 match the 'HIGH' region motif; that stretch reads PSSPDIHLGH. Residues 227 to 231 carry the 'KMSKS' region motif; sequence KMSKS. Lysine 230 provides a ligand contact to ATP. One can recognise an S4 RNA-binding domain in the interval 338–396; the sequence is ICVIDFIIKADLAKSKSEARRLLEQGGVEINSAKISDPGTTVKCGDIIKAGKRRYSKAV.

Belongs to the class-I aminoacyl-tRNA synthetase family. TyrS type 2 subfamily. Homodimer.

The protein resides in the cytoplasm. It catalyses the reaction tRNA(Tyr) + L-tyrosine + ATP = L-tyrosyl-tRNA(Tyr) + AMP + diphosphate + H(+). In terms of biological role, catalyzes the attachment of tyrosine to tRNA(Tyr) in a two-step reaction: tyrosine is first activated by ATP to form Tyr-AMP and then transferred to the acceptor end of tRNA(Tyr). The polypeptide is Tyrosine--tRNA ligase (Dehalococcoides mccartyi (strain ATCC BAA-2266 / KCTC 15142 / 195) (Dehalococcoides ethenogenes (strain 195))).